Reading from the N-terminus, the 197-residue chain is Cold-regulated 413 plasma membrane protein 1 (197 aa).

The Extracellular portion of the chain corresponds to 1-40 (MPMKSLRNDHGTLKAMIGSDFNELTIAAKNLATHAFTLTG). The chain crosses the membrane as a helical span at residues 41–61 (LGFGTSVLEWVASIAAIYLLV). Topologically, residues 62–71 (LDRTNWKTNM) are cytoplasmic. A helical transmembrane segment spans residues 72–92 (LTSLLIPYIFFSLPSLIFGIF). Over 93–94 (RG) the chain is Extracellular. Residues 95-115 (EIGKWIAFVAVVVQLFFPKHA) traverse the membrane as a helical segment. Over 116 to 117 (RE) the chain is Cytoplasmic. Residues 118–138 (YLELPVALVLLAVVAPNLIAG) traverse the membrane as a helical segment. Residues 139–141 (TFR) are Extracellular-facing. The chain crosses the membrane as a helical span at residues 142–162 (DSWIGLAICLGIGCYLLQEHI). Residues 163 to 176 (RASGGFRNAFTKAN) lie on the Cytoplasmic side of the membrane. The helical transmembrane segment at 177 to 197 (GISNTVGIICLVVFPVWALIF) threads the bilayer.

Belongs to the Cold-regulated 413 protein family.

It is found in the membrane. This Arabidopsis thaliana (Mouse-ear cress) protein is Cold-regulated 413 plasma membrane protein 1 (COR413PM1).